We begin with the raw amino-acid sequence, 90 residues long: uncharacterized protein (90 aa).

A signal peptide spans 1–18 (MKTLPVLVLSLTLLTVFS). The interval 28 to 50 (QAKQLLRSRRQDRPSKPGFPDEP) is disordered.

The protein resides in the secreted. This is an uncharacterized protein from Homo sapiens (Human).